Consider the following 203-residue polypeptide: Small ribosomal subunit protein uS3 (203 aa).

The KH type-2 domain maps to 39 to 113 (IREIIRRNFL…NHVLNAKNIA (75 aa)).

Belongs to the universal ribosomal protein uS3 family. Part of the 30S ribosomal subunit. Forms a tight complex with proteins S10 and S14.

Its function is as follows. Binds the lower part of the 30S subunit head. Binds mRNA in the 70S ribosome, positioning it for translation. This chain is Small ribosomal subunit protein uS3, found in Carsonella ruddii.